The chain runs to 2238 residues: Golgin subfamily A member 4 (2238 aa).

Residues 1–90 form a disordered region; the sequence is MFKKLKQKIS…QTFAQKLQLR (90 aa). Ser-10 carries the post-translational modification Phosphoserine. Residues 12-41 are compositionally biased toward low complexity; sequence EQQQLQQALAPAQASSSSSTPTRTRSRTSS. Thr-39 is modified (phosphothreonine). Ser-41 is subject to Phosphoserine. Polar residues-rich tracts occupy residues 52 to 62 and 73 to 85; these read NRENASTQATK and SPSQ…TFAQ. Phosphoserine is present on residues Ser-93 and Ser-100. Disordered stretches follow at residues 132–154, 1695–1744, and 1770–1789; these read AAAF…NSDG, LKER…SQDC, and LEQG…HRAL. The interaction with MACF1 stretch occupies residues 154-224; that stretch reads GLSREQLLQR…EELQMDQQAK (71 aa). The stretch at 156–2161 forms a coiled coil; sequence SREQLLQRLR…RYEKNACAAT (2006 aa). Over residues 1695-1711 the composition is skewed to basic and acidic residues; that stretch reads LKEREKQVHSLEDKLKN. The GRIP domain maps to 2178–2225; sequence LFGEPTEFEYLRKVMFEYMMGRETKTMAKVITTVLKFPDDQAQKILER.

Homodimer. Interacts with GTP-bound ARL1 and ARL3. Interacts with MACF1. Directly interacts with TBC1D23. Interacts with FAM91A1; this interaction may be mediated by TBC1D23. In terms of tissue distribution, ubiquitous. Highly expressed in oligodendrocyte precursors, particularly at a stage just prior to myelination.

The protein localises to the cytoplasm. Its subcellular location is the golgi apparatus membrane. It localises to the golgi apparatus. It is found in the trans-Golgi network membrane. Involved in vesicular trafficking at the Golgi apparatus level. May play a role in delivery of transport vesicles containing GPI-linked proteins from the trans-Golgi network through its interaction with MACF1. Involved in endosome-to-Golgi trafficking. The sequence is that of Golgin subfamily A member 4 (Golga4) from Mus musculus (Mouse).